The sequence spans 222 residues: NADH dehydrogenase [ubiquinone] iron-sulfur protein 8-A, mitochondrial (222 aa).

2 consecutive 4Fe-4S ferredoxin-type domains span residues 114–143 and 153–182; these read RRYP…IEAE and TRYD…EGPN. Cysteine 123, cysteine 126, cysteine 129, cysteine 133, cysteine 162, cysteine 165, cysteine 168, and cysteine 172 together coordinate [4Fe-4S] cluster.

This sequence belongs to the complex I 23 kDa subunit family. In terms of assembly, complex I is composed of at least 49 different subunits. This is a component of the iron-sulfur (IP) fragment of the enzyme. It depends on [4Fe-4S] cluster as a cofactor.

Its subcellular location is the mitochondrion. The enzyme catalyses a ubiquinone + NADH + 5 H(+)(in) = a ubiquinol + NAD(+) + 4 H(+)(out). In terms of biological role, core subunit of the mitochondrial membrane respiratory chain NADH dehydrogenase (Complex I) that is believed to belong to the minimal assembly required for catalysis. Complex I functions in the transfer of electrons from NADH to the respiratory chain. The immediate electron acceptor for the enzyme is believed to be ubiquinone. May donate electrons to ubiquinone. In Arabidopsis thaliana (Mouse-ear cress), this protein is NADH dehydrogenase [ubiquinone] iron-sulfur protein 8-A, mitochondrial.